Here is a 281-residue protein sequence, read N- to C-terminus: 4-deoxy-L-threo-5-hexosulose-uronate ketol-isomerase (281 aa).

Zn(2+)-binding residues include H198, H200, E205, and H248.

This sequence belongs to the KduI family. It depends on Zn(2+) as a cofactor.

It carries out the reaction 5-dehydro-4-deoxy-D-glucuronate = 3-deoxy-D-glycero-2,5-hexodiulosonate. It functions in the pathway glycan metabolism; pectin degradation; 2-dehydro-3-deoxy-D-gluconate from pectin: step 4/5. Catalyzes the isomerization of 5-dehydro-4-deoxy-D-glucuronate to 3-deoxy-D-glycero-2,5-hexodiulosonate. In Lacticaseibacillus paracasei (strain ATCC 334 / BCRC 17002 / CCUG 31169 / CIP 107868 / KCTC 3260 / NRRL B-441) (Lactobacillus paracasei), this protein is 4-deoxy-L-threo-5-hexosulose-uronate ketol-isomerase.